A 273-amino-acid polypeptide reads, in one-letter code: 3-methyl-2-oxobutanoate hydroxymethyltransferase (273 aa).

Residues Asp-53 and Asp-92 each coordinate Mg(2+). 3-methyl-2-oxobutanoate is bound by residues 53-54, Asp-92, and Lys-122; that span reads DS. Glu-124 contacts Mg(2+). Residue Glu-191 is the Proton acceptor of the active site.

The protein belongs to the PanB family. In terms of assembly, homodecamer; pentamer of dimers. It depends on Mg(2+) as a cofactor.

The protein resides in the cytoplasm. The enzyme catalyses 3-methyl-2-oxobutanoate + (6R)-5,10-methylene-5,6,7,8-tetrahydrofolate + H2O = 2-dehydropantoate + (6S)-5,6,7,8-tetrahydrofolate. It functions in the pathway cofactor biosynthesis; (R)-pantothenate biosynthesis; (R)-pantoate from 3-methyl-2-oxobutanoate: step 1/2. Functionally, catalyzes the reversible reaction in which hydroxymethyl group from 5,10-methylenetetrahydrofolate is transferred onto alpha-ketoisovalerate to form ketopantoate. This Parabacteroides distasonis (strain ATCC 8503 / DSM 20701 / CIP 104284 / JCM 5825 / NCTC 11152) protein is 3-methyl-2-oxobutanoate hydroxymethyltransferase.